The sequence spans 227 residues: Prolactin (227 aa).

Residues 1–28 form the signal peptide; the sequence is MDSKWSRRTGSLLLLLVSNLLLCKSTAS. An intrachain disulfide couples Cys32 to Cys39. A phosphoserine mark is found at Ser54, Ser62, and Ser118. Intrachain disulfides connect Cys86-Cys202 and Cys219-Cys227.

Belongs to the somatotropin/prolactin family. Interacts with PRLR.

It localises to the secreted. Prolactin acts primarily on the mammary gland by promoting lactation. This Oryctolagus cuniculus (Rabbit) protein is Prolactin (PRL).